The chain runs to 297 residues: Calponin-1 (297 aa).

The Calponin-homology (CH) domain occupies 28-131 (HQREQELREW…STLLALASMA (104 aa)). At Ser48 the chain carries Phosphoserine. Calponin-like repeat units follow at residues 164 to 189 (IGLQ…RHLY), 204 to 229 (ISLQ…RQIF), and 243 to 268 (VSLQ…RQVY). At Thr170 the chain carries Phosphothreonine; by ROCK2. Position 175 is a phosphoserine; by ROCK2 (Ser175). Phosphothreonine; by ROCK2 occurs at positions 180 and 184. A Phosphothreonine; by ROCK2 modification is found at Thr259.

The protein belongs to the calponin family. Part of cGMP kinase signaling complex at least composed of ACTA2/alpha-actin, CNN1/calponin H1, PLN/phospholamban, PRKG1 and ITPR1. As to expression, smooth muscle, and tissues containing significant amounts of smooth muscle.

Its function is as follows. Thin filament-associated protein that is implicated in the regulation and modulation of smooth muscle contraction. It is capable of binding to actin, calmodulin and tropomyosin. The interaction of calponin with actin inhibits the actomyosin Mg-ATPase activity. This is Calponin-1 (Cnn1) from Rattus norvegicus (Rat).